The following is a 1411-amino-acid chain: ATP-dependent permease PDR11 (1411 aa).

Residues 2 to 388 are Cytoplasmic-facing; the sequence is SLSKYFNPIP…IGDRNYLISQ (387 aa). The ABC transporter 1 domain occupies 31 to 273; the sequence is VQNDEESASE…FHDTLQIKKN (243 aa). Residues 389-409 form a helical membrane-spanning segment; it reads FVSVVVQSLVIGSLFYNIPLT. At 410–418 the chain is on the extracellular side; that stretch reads TIGSFSRGS. A helical membrane pass occupies residues 419-439; sequence LTFFSILFFTFLSLADMPASF. Over 440 to 471 the chain is Cytoplasmic; that stretch reads QRQPVVRKHVQLHFYYNWVETLATNFFDCCSK. The chain crosses the membrane as a helical span at residues 472 to 492; sequence FILVVIFTIILYFLAHLQYNA. Residues 493–494 lie on the Extracellular side of the membrane; it reads AR. The chain crosses the membrane as a helical span at residues 495–515; the sequence is FFIFLLFLSVYNFCMVSLFAL. Residues 516–524 lie on the Cytoplasmic side of the membrane; that stretch reads TALIAPTLS. The chain crosses the membrane as a helical span at residues 525–545; the sequence is MANLLAGILLLAIAMYASYVI. Residues 546 to 636 are Extracellular-facing; it reads YMKDMHPWFI…YTYHHVWRNF (91 aa). The N-linked (GlcNAc...) asparagine glycan is linked to Asn-595. The chain crosses the membrane as a helical span at residues 637 to 657; it reads GIIIGFLCFFLFCSLLAAEYI. Topologically, residues 658–1090 are cytoplasmic; that stretch reads TPLFTRENLL…QYICTKRDMT (433 aa). In terms of domain architecture, ABC transporter 2 spans 751–979; sequence ISWKNINYTI…FVAHDRRLTF (229 aa). Position 782–789 (782–789) interacts with ATP; it reads GESGAGKT. The helical transmembrane segment at 1091 to 1111 threads the bilayer; the sequence is YVFAKYALNAGAGLFIGFSFW. The Extracellular segment spans residues 1112–1117; sequence RTKHNI. Residues 1118 to 1138 traverse the membrane as a helical segment; that stretch reads NGLQDAIFLCFMMLCVSSPLI. Residues 1139–1175 lie on the Cytoplasmic side of the membrane; it reads NQVQDKALQSKEVYIAREARSNTYHWTVLLIAQTIVE. The helical transmembrane segment at 1176-1196 threads the bilayer; it reads LPLAISSSTLFFLCCYFCCGF. The Extracellular portion of the chain corresponds to 1197–1204; sequence ETSARVAG. Residues 1205–1225 form a helical membrane-spanning segment; the sequence is VFYLNYILFSMYYLSFGLWLL. At 1226 to 1230 the chain is on the cytoplasmic side; sequence YSAPD. A helical membrane pass occupies residues 1231-1251; sequence LQTAAVFVAFLYSFTASFCGV. At 1252-1355 the chain is on the extracellular side; it reads MQPYSLFPRF…NMSYHHRWRN (104 aa). Asn-1289, Asn-1324, and Asn-1346 each carry an N-linked (GlcNAc...) asparagine glycan. Residues 1356-1376 form a helical membrane-spanning segment; it reads FGFEWVFVCFNIAAMFVGFYL. The Cytoplasmic segment spans residues 1377–1411; that stretch reads TYIKKIWPSVIDGIKKCIPSMRRSKTSHNPNEQSV.

The protein belongs to the ABC transporter superfamily. ABCG family. PDR (TC 3.A.1.205) subfamily.

It is found in the membrane. Its function is as follows. Transporter involved in the uptake of sterol. This Saccharomyces cerevisiae (strain ATCC 204508 / S288c) (Baker's yeast) protein is ATP-dependent permease PDR11 (PDR11).